The sequence spans 261 residues: Cytochrome c oxidase subunit 3 (261 aa).

The Mitochondrial matrix segment spans residues 1–15 (MAHQAHPYHMVDPSP). Residues 16-34 (WPLTGATAALLMTSGLAIW) traverse the membrane as a helical segment. Topologically, residues 35-40 (FHFHSL) are mitochondrial intermembrane. A helical membrane pass occupies residues 41–66 (LLLYLGLTLLLLTMIQWWRDIIREGT). Topologically, residues 67–72 (FQGHHT) are mitochondrial matrix. Residues 73–105 (PPVQKGLRYGMILFIVSEVFFFLGFFWAFYHSS) form a helical membrane-spanning segment. The Mitochondrial intermembrane portion of the chain corresponds to 106-128 (LAPTPELGGCWPPTGINPLDPFE). A helical membrane pass occupies residues 129 to 152 (VPLLNTAVLLASGVTVTWAHHGLM). The Mitochondrial matrix segment spans residues 153–155 (EGN). A helical transmembrane segment spans residues 156 to 183 (RKEAIQALTLTIILGVYFTALQAMEYYE). The Mitochondrial intermembrane portion of the chain corresponds to 184 to 190 (APFTIAD). The helical transmembrane segment at 191–223 (GVYGTTFFVATGFHGLHVIIGSTFLAVCLLRQV) threads the bilayer. Topologically, residues 224–232 (LYHFTSEHH) are mitochondrial matrix. A helical membrane pass occupies residues 233–256 (FGFEAAAWYWHFVDVVWLFLYVSI). Over 257-261 (YWWGS) the chain is Mitochondrial intermembrane.

It belongs to the cytochrome c oxidase subunit 3 family. Component of the cytochrome c oxidase (complex IV, CIV), a multisubunit enzyme composed of 14 subunits. The complex is composed of a catalytic core of 3 subunits MT-CO1, MT-CO2 and MT-CO3, encoded in the mitochondrial DNA, and 11 supernumerary subunits COX4I, COX5A, COX5B, COX6A, COX6B, COX6C, COX7A, COX7B, COX7C, COX8 and NDUFA4, which are encoded in the nuclear genome. The complex exists as a monomer or a dimer and forms supercomplexes (SCs) in the inner mitochondrial membrane with NADH-ubiquinone oxidoreductase (complex I, CI) and ubiquinol-cytochrome c oxidoreductase (cytochrome b-c1 complex, complex III, CIII), resulting in different assemblies (supercomplex SCI(1)III(2)IV(1) and megacomplex MCI(2)III(2)IV(2)).

It localises to the mitochondrion inner membrane. The catalysed reaction is 4 Fe(II)-[cytochrome c] + O2 + 8 H(+)(in) = 4 Fe(III)-[cytochrome c] + 2 H2O + 4 H(+)(out). Its function is as follows. Component of the cytochrome c oxidase, the last enzyme in the mitochondrial electron transport chain which drives oxidative phosphorylation. The respiratory chain contains 3 multisubunit complexes succinate dehydrogenase (complex II, CII), ubiquinol-cytochrome c oxidoreductase (cytochrome b-c1 complex, complex III, CIII) and cytochrome c oxidase (complex IV, CIV), that cooperate to transfer electrons derived from NADH and succinate to molecular oxygen, creating an electrochemical gradient over the inner membrane that drives transmembrane transport and the ATP synthase. Cytochrome c oxidase is the component of the respiratory chain that catalyzes the reduction of oxygen to water. Electrons originating from reduced cytochrome c in the intermembrane space (IMS) are transferred via the dinuclear copper A center (CU(A)) of subunit 2 and heme A of subunit 1 to the active site in subunit 1, a binuclear center (BNC) formed by heme A3 and copper B (CU(B)). The BNC reduces molecular oxygen to 2 water molecules using 4 electrons from cytochrome c in the IMS and 4 protons from the mitochondrial matrix. The polypeptide is Cytochrome c oxidase subunit 3 (MT-CO3) (Scyliorhinus canicula (Small-spotted catshark)).